We begin with the raw amino-acid sequence, 299 residues long: HTH-type transcriptional regulator ArgP (299 aa).

One can recognise an HTH lysR-type domain in the interval 4–60; the sequence is PDYRALQALDAVIRERGFERAAQKLCITQSAVSQRIKQLENLFGQPLLVRTVPPQPT. The H-T-H motif DNA-binding region spans 21–40; that stretch reads FERAAQKLCITQSAVSQRIK.

Belongs to the LysR transcriptional regulatory family. As to quaternary structure, homodimer.

Controls the transcription of genes involved in arginine and lysine metabolism. The polypeptide is HTH-type transcriptional regulator ArgP (Proteus mirabilis (strain HI4320)).